A 186-amino-acid polypeptide reads, in one-letter code: Peptidyl-tRNA hydrolase (186 aa).

Tyr13 is a binding site for tRNA. The Proton acceptor role is filled by His18. Residues Tyr59, Asn61, and Asn107 each coordinate tRNA.

It belongs to the PTH family. As to quaternary structure, monomer.

It is found in the cytoplasm. It catalyses the reaction an N-acyl-L-alpha-aminoacyl-tRNA + H2O = an N-acyl-L-amino acid + a tRNA + H(+). Hydrolyzes ribosome-free peptidyl-tRNAs (with 1 or more amino acids incorporated), which drop off the ribosome during protein synthesis, or as a result of ribosome stalling. In terms of biological role, catalyzes the release of premature peptidyl moieties from peptidyl-tRNA molecules trapped in stalled 50S ribosomal subunits, and thus maintains levels of free tRNAs and 50S ribosomes. The chain is Peptidyl-tRNA hydrolase from Thermotoga petrophila (strain ATCC BAA-488 / DSM 13995 / JCM 10881 / RKU-1).